The sequence spans 627 residues: Interferon-induced GTP-binding protein MxB (627 aa).

The Dynamin-type G domain maps to 34–307 (DLALPAIAVI…LVHHIQRSLP (274 aa)). The interval 44–51 (GDQSSGKS) is G1 motif. 44-51 (GDQSSGKS) contacts GTP. Positions 69–71 (VTR) are G2 motif. Residues 145–148 (DLPG) form a G3 motif region. Residues 145–149 (DLPGI) and 214–217 (TKPD) each bind GTP. Residues 214–217 (TKPD) are G4 motif. A G5 motif region spans residues 246–249 (RCRG). A GED domain is found at 541-627 (LSEMKLHLES…MKAQNLLATY (87 aa)).

It belongs to the TRAFAC class dynamin-like GTPase superfamily. Dynamin/Fzo/YdjA family.

The protein localises to the cytoplasm. The protein is Interferon-induced GTP-binding protein MxB (mxb) of Danio rerio (Zebrafish).